A 393-amino-acid polypeptide reads, in one-letter code: uncharacterized protein (393 aa).

The 59-residue stretch at 12-70 (APLLGSKIKLNIEKLAIGGAGVARHEGMVVFVPQAAPNEEILAEITLVKKNFMEARVVE) folds into the TRAM domain. The [4Fe-4S] cluster site is built by Cys-83, Cys-89, Cys-92, and Cys-166. S-adenosyl-L-methionine is bound by residues Gln-221, Tyr-250, Glu-273, and Asp-316. Cys-343 acts as the Nucleophile in catalysis.

The protein belongs to the class I-like SAM-binding methyltransferase superfamily. RNA M5U methyltransferase family.

This is an uncharacterized protein from Bdellovibrio bacteriovorus (strain ATCC 15356 / DSM 50701 / NCIMB 9529 / HD100).